The chain runs to 177 residues: Large ribosomal subunit protein uL6 (177 aa).

The protein belongs to the universal ribosomal protein uL6 family. As to quaternary structure, part of the 50S ribosomal subunit.

Functionally, this protein binds to the 23S rRNA, and is important in its secondary structure. It is located near the subunit interface in the base of the L7/L12 stalk, and near the tRNA binding site of the peptidyltransferase center. This Paramagnetospirillum magneticum (strain ATCC 700264 / AMB-1) (Magnetospirillum magneticum) protein is Large ribosomal subunit protein uL6.